The following is a 63-amino-acid chain: DNA-directed RNA polymerase 7 kDa subunit (63 aa).

The protein belongs to the poxviridae DNA-directed RNA polymerase 7 kDa subunit family. In terms of assembly, the DNA-dependent RNA polymerase used for intermediate and late genes expression consists of eight subunits 147 kDa, 133 kDa, 35 kDa, 30 kDa, 22 kDa, 19 kDa, 18 kDa and 7 kDa totalling more than 500 kDa in mass. The same holoenzyme, with the addition of the transcription-specificity factor RAP94, is used for early gene expression.

It is found in the virion. It catalyses the reaction RNA(n) + a ribonucleoside 5'-triphosphate = RNA(n+1) + diphosphate. Its function is as follows. Part of the DNA-dependent RNA polymerase which catalyzes the transcription of viral DNA into RNA using the four ribonucleoside triphosphates as substrates. Responsible for the transcription of early, intermediate and late genes. DNA-dependent RNA polymerase associates with the early transcription factor (ETF) thereby allowing the early genes transcription. Late transcription, and probably also intermediate transcription, require newly synthesized RNA polymerase. The chain is DNA-directed RNA polymerase 7 kDa subunit (RPO7) from Myxoma virus (strain Lausanne) (MYXV).